The sequence spans 472 residues: Peptidoglycan endopeptidase RipA (472 aa).

Positions 1–39 form a signal peptide, tat-type signal; it reads MRRNRRGSPARPAARFVRPAIPSALSVALLVCTPGLATA. Positions 340–472 constitute a NlpC/P60 domain; sequence RQASEYVIRR…TPYVVRYIEY (133 aa). Residue Cys-383 is the Nucleophile of the active site. The active-site Proton acceptor is the His-432. Glu-444 is a catalytic residue.

It belongs to the peptidase C40 family. In terms of assembly, monomer. Interacts with RpfB and PBP1A (ponA1) via residues 448-472 of RipA, interacts with RpfE. Interacts with the chaperone MoxR1. RipA-MoxR1 interaction in the cytoplasm leads to proper folding of RipA, resulting in its secretion. Also interacts with Mce2B. Post-translationally, exported by the Tat system. The position of the signal peptide cleavage has not been experimentally proven.

It is found in the secreted. Its activity is regulated as follows. MoxR1-mediated folding is critical for secretion via the TAT system. The synergistic effects on peptidoglycan degradation of RipA plus RpfB are inhibited by addition of PBP1A (ponA1). Peptidoglycan endopeptidase that cleaves the bond between D-glutamate and meso-diaminopimelate. Binds and degrades high-molecular weight peptidoglycan from a number of Actinobacteria; activity is increased in the presence of RpfB and inhibited by PBP1A (ponA1). Required for normal separation of daughter cells after cell division and for cell wall integrity. Required for host cell invasion and intracellular survival in host macrophages. This chain is Peptidoglycan endopeptidase RipA (ripA), found in Mycobacterium tuberculosis (strain ATCC 25618 / H37Rv).